The primary structure comprises 151 residues: 3-hydroxyacyl-[acyl-carrier-protein] dehydratase FabZ (151 aa).

His-54 is a catalytic residue.

This sequence belongs to the thioester dehydratase family. FabZ subfamily.

It localises to the cytoplasm. It catalyses the reaction a (3R)-hydroxyacyl-[ACP] = a (2E)-enoyl-[ACP] + H2O. Functionally, involved in unsaturated fatty acids biosynthesis. Catalyzes the dehydration of short chain beta-hydroxyacyl-ACPs and long chain saturated and unsaturated beta-hydroxyacyl-ACPs. This Cronobacter sakazakii (strain ATCC BAA-894) (Enterobacter sakazakii) protein is 3-hydroxyacyl-[acyl-carrier-protein] dehydratase FabZ.